Here is a 401-residue protein sequence, read N- to C-terminus: Argininosuccinate synthase (401 aa).

Residues 9–17 and Ala35 each bind ATP; that span reads AYSGGLDTS. Tyr86 provides a ligand contact to L-citrulline. Residue Gly116 coordinates ATP. Residues Thr118, Asn122, and Asp123 each coordinate L-aspartate. Asn122 contacts L-citrulline. Residues Arg126, Ser175, Ser184, Glu261, and Tyr273 each contribute to the L-citrulline site.

It belongs to the argininosuccinate synthase family. Type 1 subfamily. As to quaternary structure, homotetramer.

The protein resides in the cytoplasm. It catalyses the reaction L-citrulline + L-aspartate + ATP = 2-(N(omega)-L-arginino)succinate + AMP + diphosphate + H(+). Its pathway is amino-acid biosynthesis; L-arginine biosynthesis; L-arginine from L-ornithine and carbamoyl phosphate: step 2/3. This chain is Argininosuccinate synthase, found in Aquifex aeolicus (strain VF5).